The primary structure comprises 476 residues: 3-ketoacyl-CoA synthase 12 (476 aa).

A signal peptide spans 1-25; the sequence is MDLLFLFFSLLLSYLFFKIWKLIDS. In terms of domain architecture, FAE spans 26–313; that stretch reads KQDKDCYILD…FMLKLLIKKI (288 aa). Residues Cys-168, His-247, His-344, His-348, His-377, and Asn-381 contribute to the active site.

This sequence belongs to the thiolase-like superfamily. Chalcone/stilbene synthases family. Expressed in siliques, flowers and leaves.

The protein localises to the endoplasmic reticulum. The enzyme catalyses a very-long-chain acyl-CoA + malonyl-CoA + H(+) = a very-long-chain 3-oxoacyl-CoA + CO2 + CoA. It functions in the pathway lipid metabolism; fatty acid biosynthesis. The polypeptide is 3-ketoacyl-CoA synthase 12 (Arabidopsis thaliana (Mouse-ear cress)).